The chain runs to 376 residues: Flap endonuclease 1 (376 aa).

The segment at 1–105 (MGIKGLSKLL…GELNKRKENA (105 aa)) is N-domain. D34 lines the Mg(2+) pocket. 2 residues coordinate DNA: R47 and R71. Positions 87, 159, 161, 180, and 182 each coordinate Mg(2+). The interval 123–254 (QAKKLMKRTA…ITAFELIQQY (132 aa)) is I-domain. E159 is a DNA binding site. Positions 232 and 234 each coordinate DNA. Position 234 (D234) interacts with Mg(2+). Residues 336–344 (AQGRLDSFF) form an interaction with PCNA region. Positions 352 to 376 (SKSEAASGVKRKKPTTKAKESRKKK) are disordered. Residues 360–376 (VKRKKPTTKAKESRKKK) show a composition bias toward basic residues.

The protein belongs to the XPG/RAD2 endonuclease family. FEN1 subfamily. In terms of assembly, interacts with PCNA. Three molecules of FEN1 bind to one PCNA trimer with each molecule binding to one PCNA monomer. PCNA stimulates the nuclease activity without altering cleavage specificity. Mg(2+) is required as a cofactor. In terms of processing, phosphorylated. Phosphorylation upon DNA damage induces relocalization to the nuclear plasma.

Its subcellular location is the nucleus. The protein resides in the nucleolus. It is found in the nucleoplasm. The protein localises to the mitochondrion. Structure-specific nuclease with 5'-flap endonuclease and 5'-3' exonuclease activities involved in DNA replication and repair. During DNA replication, cleaves the 5'-overhanging flap structure that is generated by displacement synthesis when DNA polymerase encounters the 5'-end of a downstream Okazaki fragment. It enters the flap from the 5'-end and then tracks to cleave the flap base, leaving a nick for ligation. Also involved in the long patch base excision repair (LP-BER) pathway, by cleaving within the apurinic/apyrimidinic (AP) site-terminated flap. Acts as a genome stabilization factor that prevents flaps from equilibrating into structures that lead to duplications and deletions. Also possesses 5'-3' exonuclease activity on nicked or gapped double-stranded DNA, and exhibits RNase H activity. Also involved in replication and repair of rDNA and in repairing mitochondrial DNA. This is Flap endonuclease 1 from Entamoeba dispar (strain ATCC PRA-260 / SAW760).